A 122-amino-acid chain; its full sequence is HetP-like commitment protein Alr3234 (122 aa).

This sequence belongs to the HetP family. In terms of assembly, in bacterial two-hybrid assays interacts robustly with itself, Asl1930, Alr2902 and HetR and weakly with HetP.

Its function is as follows. Delays heterocyst differentiation and commitment when nitrogen is limiting. Interplay between the 4 HetP paralogs controls the timing of commitment to heterocyst formation and its duration. Epistatic analysis show that the 3 paralogs act upstream of hetP to delay commitment (asl1930, alr3234) or inhibit development (alr2902). Asl1930 and Alr3234 must also attenuate the activity of Alr2902. Ectopic expression does not complement a hetP deletion. The sequence is that of HetP-like commitment protein Alr3234 from Nostoc sp. (strain PCC 7120 / SAG 25.82 / UTEX 2576).